The sequence spans 743 residues: Conserved oligomeric Golgi complex subunit 8 (743 aa).

Disordered stretches follow at residues 549–672 and 704–743; these read EDGP…TEPE and TQDD…KKDD. Composition is skewed to basic and acidic residues over residues 563–581, 594–621, 633–647, and 654–664; these read ESVK…HGTD, PVKE…HETP, SEAK…HLEL, and QEIREQEHKEV. Over residues 704 to 726 the composition is skewed to acidic residues; that stretch reads TQDDPIEEEEGWGWGDDDGEEQE. Residues 727–743 are compositionally biased toward basic and acidic residues; the sequence is ISSKEVESPKEKCKKDD.

It belongs to the COG8 family. In terms of assembly, component of the conserved oligomeric Golgi complex which is composed of eight different subunits and is required for normal Golgi morphology and localization.

It localises to the golgi apparatus membrane. Required for normal Golgi function. The protein is Conserved oligomeric Golgi complex subunit 8 (cogc-8) of Caenorhabditis elegans.